Consider the following 374-residue polypeptide: NAD-capped RNA hydrolase ndx-9 (374 aa).

4 residues coordinate Zn(2+): cysteine 181, cysteine 184, cysteine 199, and cysteine 202. Substrate-binding positions include tyrosine 207, 243 to 245, glutamate 259, glutamate 263, and glutamate 307; that span reads AGF. The 129-residue stretch at 208–336 folds into the Nudix hydrolase domain; that stretch reads PTFSPVSITL…LADPLLKNLP (129 aa). 4 residues coordinate Mg(2+): alanine 243, glutamate 259, glutamate 263, and glutamate 307. The short motif at 244-265 is the Nudix box element; that stretch reads GFAHSGESMAECARREIAEEVG. Positions 367–369 match the Microbody targeting signal motif; that stretch reads LEN.

It belongs to the Nudix hydrolase family. NudC subfamily. As to quaternary structure, homodimer. Mg(2+) is required as a cofactor. Mn(2+) serves as cofactor. It depends on Zn(2+) as a cofactor.

The catalysed reaction is a 5'-end NAD(+)-phospho-ribonucleoside in mRNA + H2O = a 5'-end phospho-adenosine-phospho-ribonucleoside in mRNA + beta-nicotinamide D-ribonucleotide + 2 H(+). The enzyme catalyses NAD(+) + H2O = beta-nicotinamide D-ribonucleotide + AMP + 2 H(+). It carries out the reaction NADH + H2O = reduced beta-nicotinamide D-ribonucleotide + AMP + 2 H(+). MRNA decapping enzyme that specifically removes the nicotinamide adenine dinucleotide (NAD) cap from a subset of mRNAs by hydrolyzing the diphosphate linkage to produce nicotinamide mononucleotide (NMN) and 5' monophosphate mRNA. The NAD-cap is present at the 5'-end of some RNAs; in contrast to the canonical N7 methylguanosine (m7G) cap, the NAD cap promotes mRNA decay. Mediates the hydrolysis of some nucleoside diphosphate derivatives. This chain is NAD-capped RNA hydrolase ndx-9 (ndx-9), found in Caenorhabditis elegans.